Reading from the N-terminus, the 447-residue chain is GTPase Der (447 aa).

EngA-type G domains follow at residues 4–165 (QIIT…PEEE) and 180–357 (LQIV…KIWN). GTP-binding positions include 10–17 (GRPNVGKS), 57–61 (DTPGL), 119–122 (NKCE), 186–193 (GRPNAGKS), 233–237 (DTAGL), and 298–301 (NKWD). The KH-like domain occupies 358 to 443 (KKITTSKLNE…PIRFTYVKTK (86 aa)).

This sequence belongs to the TRAFAC class TrmE-Era-EngA-EngB-Septin-like GTPase superfamily. EngA (Der) GTPase family. Associates with the 50S ribosomal subunit.

Functionally, GTPase that plays an essential role in the late steps of ribosome biogenesis. This chain is GTPase Der, found in Rickettsia rickettsii (strain Iowa).